We begin with the raw amino-acid sequence, 138 residues long: Probable non-specific lipid-transfer protein 1 (138 aa).

The first 36 residues, 1–36 (MRTVSARSSVALVVIVAAVLVWTSSASVAPAPAPGS), serve as a signal peptide directing secretion. Disulfide bonds link C40–C88, C50–C65, C66–C111, and C86–C127.

It belongs to the plant LTP family.

In terms of biological role, plant non-specific lipid-transfer proteins transfer phospholipids as well as galactolipids across membranes. May play a role in wax or cutin deposition in the cell walls of expanding epidermal cells and certain secretory tissues. The chain is Probable non-specific lipid-transfer protein 1 from Parietaria judaica (Pellitory-of-the-wall).